The following is an 842-amino-acid chain: Oleate activated transcription factor 3 (842 aa).

Residues 22 to 50 (CTNCKRRKSKCDRQNPCSNCVRFGNKDTC) constitute a DNA-binding region (zn(2)-C6 fungal-type). A disordered region spans residues 55-101 (NPKNTESQHGEDTDNKVKKQQPQMIKGKRNGTSSSIVGSKASSISPT). The segment covering 60–71 (ESQHGEDTDNKV) has biased composition (basic and acidic residues). The segment covering 87–99 (SSSIVGSKASSIS) has biased composition (low complexity).

This sequence belongs to the OAF3 family.

Its subcellular location is the cytoplasm. It localises to the nucleus. It is found in the mitochondrion. In terms of biological role, transcriptional inhibitor with a significantly increased number of target genes in response to oleate. This is Oleate activated transcription factor 3 (OAF3) from Zygosaccharomyces rouxii (strain ATCC 2623 / CBS 732 / NBRC 1130 / NCYC 568 / NRRL Y-229).